A 605-amino-acid polypeptide reads, in one-letter code: Aspartate--tRNA(Asp/Asn) ligase (605 aa).

Glu-186 provides a ligand contact to L-aspartate. The aspartate stretch occupies residues Gln-210–Lys-213. The L-aspartate site is built by Arg-232 and His-460. Position 232–234 (Arg-232–Glu-234) interacts with ATP. Glu-494 provides a ligand contact to ATP. Arg-501 lines the L-aspartate pocket. Position 546–549 (Gly-546–Arg-549) interacts with ATP.

This sequence belongs to the class-II aminoacyl-tRNA synthetase family. Type 1 subfamily. In terms of assembly, homodimer.

It localises to the cytoplasm. It carries out the reaction tRNA(Asx) + L-aspartate + ATP = L-aspartyl-tRNA(Asx) + AMP + diphosphate. Aspartyl-tRNA synthetase with relaxed tRNA specificity since it is able to aspartylate not only its cognate tRNA(Asp) but also tRNA(Asn). Reaction proceeds in two steps: L-aspartate is first activated by ATP to form Asp-AMP and then transferred to the acceptor end of tRNA(Asp/Asn). In Chlorobium chlorochromatii (strain CaD3), this protein is Aspartate--tRNA(Asp/Asn) ligase.